We begin with the raw amino-acid sequence, 1139 residues long: Sterol regulatory element-binding protein 2 (1139 aa).

Residues methionine 1–leucine 50 are transcriptional activation (acidic). At methionine 1–arginine 479 the chain is on the cytoplasmic side. 2 disordered regions span residues glutamate 48 to threonine 104 and threonine 119 to leucine 143. Low complexity predominate over residues glycine 61 to arginine 77. Polar residues predominate over residues arginine 90–threonine 104. The span at threonine 119–glutamine 138 shows a compositional bias: pro residues. An interaction with LMNA region spans residues glutamine 235–glycine 489. In terms of domain architecture, bHLH spans glutamate 328–leucine 378. The interval leucine 378–asparagine 399 is leucine-zipper. A Glycyl lysine isopeptide (Lys-Gly) (interchain with G-Cter in SUMO2) cross-link involves residue lysine 462. A helical transmembrane segment spans residues isoleucine 480–glutamine 500. Over tryptophan 501–aspartate 531 the chain is Lumenal. The chain crosses the membrane as a helical span at residues tryptophan 532 to valine 552. The Cytoplasmic portion of the chain corresponds to lysine 553–serine 1139. The residue at position 1096 (serine 1096) is a Phosphoserine.

This sequence belongs to the SREBP family. In terms of assembly, homodimer; efficient DNA binding of the soluble transcription factor fragment requires dimerization with another bHLH protein. Interacts with LMNA. As to quaternary structure, forms a tight complex with SCAP, the SCAP-SREBP complex, in the endoplasmic reticulum membrane and the Golgi apparatus. Interacts with PAQR3; the interaction anchors the SCAP-SREBP complex to the Golgi apparatus in low cholesterol conditions. Interacts (via C-terminal domain) with RNF139. Processed in the Golgi apparatus, releasing the protein from the membrane. At low cholesterol the SCAP-SREBP complex is recruited into COPII vesicles for export from the endoplasmic reticulum. In the Golgi, complex SREBPs are cleaved sequentially by site-1 (MBTPS1, S1P) and site-2 (MBTPS2, S2P) proteases. The first cleavage by site-1 protease occurs within the luminal loop, the second cleavage by site-2 protease occurs within the first transmembrane domain, releasing the transcription factor from the Golgi membrane. Apoptosis triggers cleavage by the cysteine proteases caspase-3 and caspase-7. Cleavage and activation is induced by mediated cholesterol efflux. Post-translationally, phosphorylated by AMPK, leading to suppress protein processing and nuclear translocation, and repress target gene expression. In terms of processing, SCAP-free SREBF2 is ubiquitinated by the BCR(ARMC5) complex, leading to its degradation. Ubiquitinated; the nuclear form has a rapid turnover and is rapidly ubiquitinated and degraded by the proteasome in the nucleus.

The protein localises to the endoplasmic reticulum membrane. It localises to the golgi apparatus membrane. The protein resides in the cytoplasmic vesicle. It is found in the COPII-coated vesicle membrane. Its subcellular location is the nucleus. Activation by cleavage is down-regulated upon activation of SIRT3-dependent PRKAA1/AMPK-alpha signaling cascade which leads to inhibition of ATP-consuming lipogenesis to restore cellular energy balance. Functionally, precursor of the transcription factor form (Processed sterol regulatory element-binding protein 2), which is embedded in the endoplasmic reticulum membrane. Low sterol concentrations promote processing of this form, releasing the transcription factor form that translocates into the nucleus and activates transcription of genes involved in cholesterol biosynthesis. Its function is as follows. Key transcription factor that regulates expression of genes involved in cholesterol biosynthesis. Binds to the sterol regulatory element 1 (SRE-1) (5'-ATCACCCCAC-3'). Has dual sequence specificity binding to both an E-box motif (5'-ATCACGTGA-3') and to SRE-1 (5'-ATCACCCCAC-3'). Regulates transcription of genes related to cholesterol synthesis pathway. The protein is Sterol regulatory element-binding protein 2 (SREBF2) of Cricetulus griseus (Chinese hamster).